The primary structure comprises 357 residues: DNA polymerase IV 2 (357 aa).

The UmuC domain maps to 4–184 (IIHVDMDAFY…LAVKKFHGVG (181 aa)). Mg(2+) is bound by residues Asp8 and Asp102. The active site involves Glu103.

Belongs to the DNA polymerase type-Y family. Monomer. The cofactor is Mg(2+).

The protein localises to the cytoplasm. It catalyses the reaction DNA(n) + a 2'-deoxyribonucleoside 5'-triphosphate = DNA(n+1) + diphosphate. Poorly processive, error-prone DNA polymerase involved in untargeted mutagenesis. Copies undamaged DNA at stalled replication forks, which arise in vivo from mismatched or misaligned primer ends. These misaligned primers can be extended by PolIV. Exhibits no 3'-5' exonuclease (proofreading) activity. May be involved in translesional synthesis, in conjunction with the beta clamp from PolIII. This Agrobacterium fabrum (strain C58 / ATCC 33970) (Agrobacterium tumefaciens (strain C58)) protein is DNA polymerase IV 2 (dinB2).